Here is a 164-residue protein sequence, read N- to C-terminus: Lipoprotein signal peptidase (164 aa).

The next 2 helical transmembrane spans lie at 68 to 88 (TILV…LWNA) and 96 to 116 (FWGL…RAMF). Active-site residues include Asp121 and Asp139. A helical transmembrane segment spans residues 134–154 (TFNVADSAIVVGSCLLLIDLL).

The protein belongs to the peptidase A8 family.

It is found in the cell inner membrane. It catalyses the reaction Release of signal peptides from bacterial membrane prolipoproteins. Hydrolyzes -Xaa-Yaa-Zaa-|-(S,diacylglyceryl)Cys-, in which Xaa is hydrophobic (preferably Leu), and Yaa (Ala or Ser) and Zaa (Gly or Ala) have small, neutral side chains.. It participates in protein modification; lipoprotein biosynthesis (signal peptide cleavage). This protein specifically catalyzes the removal of signal peptides from prolipoproteins. In Solibacter usitatus (strain Ellin6076), this protein is Lipoprotein signal peptidase.